Consider the following 270-residue polypeptide: Putative carboxymethylenebutenolidase (270 aa).

Residues cysteine 147, aspartate 204, and histidine 236 contribute to the active site.

The protein belongs to the dienelactone hydrolase family.

It carries out the reaction 2-(5-oxo-2,5-dihydrofuran-2-ylidene)acetate + H2O = 4-oxohex-2-enedioate + H(+). The polypeptide is Putative carboxymethylenebutenolidase (ysgA) (Salmonella typhi).